A 1764-amino-acid chain; its full sequence is MSNHSEAYGSRDQRREKYTQGKEFEDGTLETLESIISAVEDETLSKDYQPLIVFFQRGFGAQLVQTWSYYAQVNNHGKFSKTTSLLTKTLRVLSSDTSTVTIGSGLIRLILTDYTKVLYRGLNNMRAQLTNPILRLLKQIVNFNNGQHIEELVSYFDFSLPILPRLLVPSKSELANGNSSADSSKHDSLRFTFIKFWLTLISNASPFVRKELLTENFKIMSNLFKFMNKADSDKLSEHILSVFINDILKEKSFKRTTKTKILNELAASKIHHFYYSSNKNLVKKANEFFLTFGASRDFSVAFPDNCVWFKNSVADGASHGAPITVNQVEFQIHNKLLFNTLRLFKPWEDTLQLGTLIKILENVPELVAPYSIFLTTNGNYDPKMTSYWFGITLLINKIINLKIPQFMEKVDSNIPPATSLVIENILPSLLTKSSLVKSLQFETPIIRQLACQSIVLALKKLEKVSTFYDQKGWRNEKTILLNEFHTRIPDLPIFVSTLSNSLASNKDNRILPLSISIIFNYYSKMFPNLFSINLPSSNIYTDIMQKSKISGIEFAILDNYLQFQEFNSTQTRWWNPSSGGNSLFTLLLKLASSKNASNVITTRISNLLDELTRTNVIFNISLISPVMALVNSLQGLSLQVSEIDNMEQVWKWFDETISRVVKTPYKYVDMAKEYNYISPFIMCLSEQWKYVDKSGNPEFLIKWLILFLRNMIFIGEDHIGIDKLVKNVFPEVSDHDVNIYLKLDSFEENIKKTNSSNSLISSMKSSSFFQYISALPSKNLMNISRLPVNKLDAAGILFRVQLLVEDDSVVYDNWFEATACELTGKIASYMVTDTEFPIIKVLERYINFALPKLAIEKRNALLMKKSRFMCNLIGAVCFETGHQLVEFREIIQKVVFSGENVEEYANYNELYQKEDVNAFLTSVSEYLSTSALTSLLMCSTKLESTRNILQKLFNEGKTIKISLVKNILNKAANEDPASIKEVNISLAKFFEENKVCVDASSDPMGKLSLSETTSLINSFVSSDLNYLVLKAFYRWEHFSFPSFIPSIWRIKDSPLLSIVTTAALFKHMQDKDFSAFAHETISKYGNEIAKSTYTTSKSEIFDEILNMITTYIDFYDETKRNEILKCVLSQSDHKYHAATVRYIAAHNNFTYPGVETWLHKTLLYLTKYLSERKVISNSFFELLRAMAELLKLEEVPNKLNVKIINSQLEAILGSEWIKQIKVLEYVIVLIFCVSKKSIQSQRMVQLLLSNDSYSSIMIKDNDEDSSYRKFLSTMILFSLFSIDPVVNSTPIVQEKLLTFYSGTISSNDKLILKILETIESHTATSWTNMIFSWEFIKDEEEEILEAIGDTRLITKEREGLILTLQKNMIKKSIDRYVLERPQVPELYTDSNTNNYDATTRCDLVKKYYDDTERSGVDMYDPLFLLLLIIHNKELVKMVKDDEGNVTYRYEFENFLDCKIFQFIICSLSDCHTVANISYEHLSNLASSLEKKTAQMNLEKQITSKDNERKESDSDLIKYNSIYQVLIKRILYQRQQNQDPINPLIWFSISRIVDLLGSPTAPLHEKAYRWVLSNSTIRSWDIPMVSDVMMSYNKRQQDDNKKEIDMEIYYGELSWVLTTICKGIKTDEDYKMLEKKGVFEWLLNLINMPYLKERLRELIYFIFYKVQRVADDGGLNLISRNGIVSFFEVLNNNIKSRLPQDDILNNIGTLRNENRGTLNTTLRLAQEQNGIEKLLLGYNELVKSQKRLILWTEGDSDNVVKRLRK.

Residues 1-23 form a disordered region; the sequence is MSNHSEAYGSRDQRREKYTQGKE. Basic and acidic residues predominate over residues 9–23; sequence GSRDQRREKYTQGKE.

Associates with pre-60S ribosomal particles. Predominantly associated with the 27SA2 pre-rRNA. Can associate with a subset of box H/ACA and box C/D small nucleolar RNPs (snoRNPs) required for peptidyl transferase center modification and with small RNAs snR37 and snR42. Interacts with URB2. Together with DBP6, NOP8, URB2 and RSA3, forms an RNA-independent complex, which is required during early maturation of nascent 60S ribosomal subunits.

The protein resides in the nucleus. It is found in the nucleolus. Required for 60S ribosomal subunit formation and pre-rRNA processing. Required for normal accumulation of 25S and 5.8S rRNAs. This chain is Nucleolar pre-ribosomal-associated protein 1 (URB1), found in Saccharomyces cerevisiae (strain ATCC 204508 / S288c) (Baker's yeast).